A 341-amino-acid chain; its full sequence is UDP-N-acetylglucosamine--N-acetylmuramyl-(pentapeptide) pyrophosphoryl-undecaprenol N-acetylglucosamine transferase (341 aa).

UDP-N-acetyl-alpha-D-glucosamine-binding positions include 10–12 (TGG), Asn124, Ser177, and Gln275.

The protein belongs to the glycosyltransferase 28 family. MurG subfamily.

The protein localises to the cell inner membrane. The catalysed reaction is di-trans,octa-cis-undecaprenyl diphospho-N-acetyl-alpha-D-muramoyl-L-alanyl-D-glutamyl-meso-2,6-diaminopimeloyl-D-alanyl-D-alanine + UDP-N-acetyl-alpha-D-glucosamine = di-trans,octa-cis-undecaprenyl diphospho-[N-acetyl-alpha-D-glucosaminyl-(1-&gt;4)]-N-acetyl-alpha-D-muramoyl-L-alanyl-D-glutamyl-meso-2,6-diaminopimeloyl-D-alanyl-D-alanine + UDP + H(+). It participates in cell wall biogenesis; peptidoglycan biosynthesis. Functionally, cell wall formation. Catalyzes the transfer of a GlcNAc subunit on undecaprenyl-pyrophosphoryl-MurNAc-pentapeptide (lipid intermediate I) to form undecaprenyl-pyrophosphoryl-MurNAc-(pentapeptide)GlcNAc (lipid intermediate II). The sequence is that of UDP-N-acetylglucosamine--N-acetylmuramyl-(pentapeptide) pyrophosphoryl-undecaprenol N-acetylglucosamine transferase from Campylobacter hominis (strain ATCC BAA-381 / DSM 21671 / CCUG 45161 / LMG 19568 / NCTC 13146 / CH001A).